Here is a 336-residue protein sequence, read N- to C-terminus: Dihydroorotate dehydrogenase (quinone) (336 aa).

FMN is bound by residues Ala-62–Lys-66 and Thr-86. Residue Lys-66 coordinates substrate. Asn-111–Phe-115 is a substrate binding site. Residues Asn-139 and Asn-172 each coordinate FMN. Asn-172 provides a ligand contact to substrate. The active-site Nucleophile is Ser-175. Asn-177 contacts substrate. Residues Lys-217 and Thr-245 each contribute to the FMN site. Substrate is bound at residue Asn-246–Thr-247. FMN contacts are provided by residues Gly-268, Gly-297, and Tyr-318–Ser-319.

It belongs to the dihydroorotate dehydrogenase family. Type 2 subfamily. In terms of assembly, monomer. The cofactor is FMN.

It localises to the cell membrane. It carries out the reaction (S)-dihydroorotate + a quinone = orotate + a quinol. It functions in the pathway pyrimidine metabolism; UMP biosynthesis via de novo pathway; orotate from (S)-dihydroorotate (quinone route): step 1/1. In terms of biological role, catalyzes the conversion of dihydroorotate to orotate with quinone as electron acceptor. This Klebsiella pneumoniae subsp. pneumoniae (strain ATCC 700721 / MGH 78578) protein is Dihydroorotate dehydrogenase (quinone).